The chain runs to 185 residues: Elongation factor P 1 (185 aa).

This sequence belongs to the elongation factor P family.

It localises to the cytoplasm. Its pathway is protein biosynthesis; polypeptide chain elongation. Involved in peptide bond synthesis. Stimulates efficient translation and peptide-bond synthesis on native or reconstituted 70S ribosomes in vitro. Probably functions indirectly by altering the affinity of the ribosome for aminoacyl-tRNA, thus increasing their reactivity as acceptors for peptidyl transferase. The chain is Elongation factor P 1 (efp1) from Chlamydia caviae (strain ATCC VR-813 / DSM 19441 / 03DC25 / GPIC) (Chlamydophila caviae).